Consider the following 141-residue polypeptide: Small ribosomal subunit protein bS18c (141 aa).

2 disordered regions span residues glutamate 14 to glycine 55 and isoleucine 120 to lysine 141. Over residues proline 24 to proline 34 the composition is skewed to pro residues. Over residues serine 35–arginine 51 the composition is skewed to basic residues.

The protein belongs to the bacterial ribosomal protein bS18 family. As to quaternary structure, part of the 30S ribosomal subunit.

Its subcellular location is the plastid. The protein localises to the chloroplast. This is Small ribosomal subunit protein bS18c from Pelargonium hortorum (Common geranium).